Here is a 330-residue protein sequence, read N- to C-terminus: Ketol-acid reductoisomerase (NADP(+)) (330 aa).

In terms of domain architecture, KARI N-terminal Rossmann spans Ala2–Thr182. NADP(+)-binding positions include Tyr25–Gln28, Ser51, Ser53, and Asp83–Gln86. His108 is a catalytic residue. Gly134 is an NADP(+) binding site. Residues Thr183–Leu328 enclose the KARI C-terminal knotted domain. Positions 191, 195, 227, and 231 each coordinate Mg(2+). Ser252 serves as a coordination point for substrate.

This sequence belongs to the ketol-acid reductoisomerase family. Requires Mg(2+) as cofactor.

The catalysed reaction is (2R)-2,3-dihydroxy-3-methylbutanoate + NADP(+) = (2S)-2-acetolactate + NADPH + H(+). It carries out the reaction (2R,3R)-2,3-dihydroxy-3-methylpentanoate + NADP(+) = (S)-2-ethyl-2-hydroxy-3-oxobutanoate + NADPH + H(+). Its pathway is amino-acid biosynthesis; L-isoleucine biosynthesis; L-isoleucine from 2-oxobutanoate: step 2/4. The protein operates within amino-acid biosynthesis; L-valine biosynthesis; L-valine from pyruvate: step 2/4. Its function is as follows. Involved in the biosynthesis of branched-chain amino acids (BCAA). Catalyzes an alkyl-migration followed by a ketol-acid reduction of (S)-2-acetolactate (S2AL) to yield (R)-2,3-dihydroxy-isovalerate. In the isomerase reaction, S2AL is rearranged via a Mg-dependent methyl migration to produce 3-hydroxy-3-methyl-2-ketobutyrate (HMKB). In the reductase reaction, this 2-ketoacid undergoes a metal-dependent reduction by NADPH to yield (R)-2,3-dihydroxy-isovalerate. The polypeptide is Ketol-acid reductoisomerase (NADP(+)) (Microcystis aeruginosa (strain NIES-843 / IAM M-2473)).